Consider the following 309-residue polypeptide: Protein lifeguard 3 (309 aa).

2 disordered regions span residues 1-31 and 64-84; these read MSNP…QPSV and PMNY…SFRP. The segment covering 70 to 84 has biased composition (basic and acidic residues); it reads DYNEEERAGSDSFRP. 2 positions are modified to phosphoserine: S79 and S81. Helical transmembrane passes span 101 to 121, 132 to 152, 163 to 183, 188 to 208, 221 to 241, 244 to 264, and 286 to 306; these read YCII…FTFV, VAVY…LACC, IILL…ISSM, AVII…IFCF, FCVL…VLIF, IYWL…LFLA, and GALQ…QLVG.

The protein belongs to the BI1 family. LFG subfamily. Expressed in most tissues except spleen, thymus and testis.

It is found in the membrane. Its subcellular location is the lysosome membrane. The protein resides in the endosome membrane. In terms of biological role, negatively regulates aortic matrix metalloproteinase-9 (MMP9) production and may play a protective role in vascular remodeling. The chain is Protein lifeguard 3 (Tmbim1) from Mus musculus (Mouse).